The primary structure comprises 272 residues: Shikimate dehydrogenase (NADP(+)) (272 aa).

Residues Ser-14 to Ser-16 and Thr-61 contribute to the shikimate site. The Proton acceptor role is filled by Lys-65. Glu-77 serves as a coordination point for NADP(+). Positions 86 and 102 each coordinate shikimate. NADP(+) is bound by residues Gly-126–Ala-130, Asn-149–Arg-154, and Met-213. Residue Tyr-215 coordinates shikimate. An NADP(+)-binding site is contributed by Gly-237.

Belongs to the shikimate dehydrogenase family. Homodimer.

It carries out the reaction shikimate + NADP(+) = 3-dehydroshikimate + NADPH + H(+). The protein operates within metabolic intermediate biosynthesis; chorismate biosynthesis; chorismate from D-erythrose 4-phosphate and phosphoenolpyruvate: step 4/7. Functionally, involved in the biosynthesis of the chorismate, which leads to the biosynthesis of aromatic amino acids. Catalyzes the reversible NADPH linked reduction of 3-dehydroshikimate (DHSA) to yield shikimate (SA). This Escherichia coli O6:K15:H31 (strain 536 / UPEC) protein is Shikimate dehydrogenase (NADP(+)).